The primary structure comprises 44 residues: Large ribosomal subunit protein bL34 (44 aa).

The disordered stretch occupies residues 1–26 (MQRTLGGTNRKRKRTSGFRARMRTPD). Residues 9-22 (NRKRKRTSGFRARM) show a composition bias toward basic residues.

Belongs to the bacterial ribosomal protein bL34 family.

The protein is Large ribosomal subunit protein bL34 of Trichormus variabilis (strain ATCC 29413 / PCC 7937) (Anabaena variabilis).